Here is a 156-residue protein sequence, read N- to C-terminus: SsrA-binding protein (156 aa).

Belongs to the SmpB family.

The protein localises to the cytoplasm. Functionally, required for rescue of stalled ribosomes mediated by trans-translation. Binds to transfer-messenger RNA (tmRNA), required for stable association of tmRNA with ribosomes. tmRNA and SmpB together mimic tRNA shape, replacing the anticodon stem-loop with SmpB. tmRNA is encoded by the ssrA gene; the 2 termini fold to resemble tRNA(Ala) and it encodes a 'tag peptide', a short internal open reading frame. During trans-translation Ala-aminoacylated tmRNA acts like a tRNA, entering the A-site of stalled ribosomes, displacing the stalled mRNA. The ribosome then switches to translate the ORF on the tmRNA; the nascent peptide is terminated with the 'tag peptide' encoded by the tmRNA and targeted for degradation. The ribosome is freed to recommence translation, which seems to be the essential function of trans-translation. Required for trans-translation. Probably required for sporulation; deletion of the gene for tmRNA impairs sporulation via its effect on trans-translation, and as smpB is required for trans-translation under non-stress conditions, it is also probably required during sporulation. This is SsrA-binding protein from Bacillus subtilis (strain 168).